Consider the following 164-residue polypeptide: MARTKHPAVRKSKAEPKKKLQFERSPRPSKAQRAGGGTGTSATTRSAAGTSASGTPRQQTKQRKPHRFRPGTVALREIRKFQKTTELLIPFAPFSRLVREITDFYSKDVSRWTLEALLALQEAAEYHLVDIFEVSNLCAIHAKRVTIMQKDMQLARRIGGRRPW.

Residues 1–11 (MARTKHPAVRK) are compositionally biased toward basic residues. The disordered stretch occupies residues 1-71 (MARTKHPAVR…QRKPHRFRPG (71 aa)). The residue at position 5 (Lys5) is an N6,N6,N6-trimethyllysine; alternate. At Lys5 the chain carries N6,N6-dimethyllysine; alternate. Lys5, Lys19, and Lys30 each carry N6-methyllysine; alternate. The segment covering 12 to 26 (SKAEPKKKLQFERSP) has biased composition (basic and acidic residues). Lys19 carries the N6-acetyllysine; alternate modification. Residue Lys30 is modified to N6,N6,N6-trimethyllysine; alternate. Residue Lys30 is modified to N6,N6-dimethyllysine; alternate. Low complexity predominate over residues 40 to 55 (TSATTRSAAGTSASGT). Basic residues predominate over residues 60–69 (TKQRKPHRFR).

This sequence belongs to the histone H3 family.

It localises to the chromosome. It is found in the centromere. Its subcellular location is the kinetochore. Its function is as follows. Histone H3-like variant which exclusively replaces conventional H3 in the nucleosome core of centromeric chromatin at the inner plate of the kinetochore. Required for recruitment and assembly of kinetochore proteins, mitotic progression and chromosome segregation. This is Histone H3-like centromeric protein CENH3 from Oryza sativa subsp. japonica (Rice).